The primary structure comprises 102 residues: Small ribosomal subunit protein uS10 (102 aa).

The protein belongs to the universal ribosomal protein uS10 family. Part of the 30S ribosomal subunit.

Its function is as follows. Involved in the binding of tRNA to the ribosomes. The chain is Small ribosomal subunit protein uS10 from Bifidobacterium longum (strain DJO10A).